Consider the following 151-residue polypeptide: MKIIFVFALLAIAACSATAQFDVLGQNIRQYQVQSPLLLQQQVLSPYNEFVRQQYSIAASTFLQSAAFQLRNNQVLQQLRLVAQQSHYQDINVVQAIAHQLHLQQFGNLYIDRNLAQAQALLAFNLPSTYGIYPWSYSAPDSITTLGGVLY.

The signal sequence occupies residues 1-19 (MKIIFVFALLAIAACSATA). Position 20 is a pyrrolidone carboxylic acid (Gln-20).

The protein belongs to the prolamin family.

It is found in the vacuole. The protein localises to the aleurone grain. Seed storage protein; serves as a source of nitrogen, carbon and sulfur for the young developing seedling. This chain is Prolamin PPROL 14P (PROLM20), found in Oryza sativa subsp. japonica (Rice).